Reading from the N-terminus, the 409-residue chain is Pyruvate dehydrogenase E1 component subunit alpha, mitochondrial (409 aa).

At T6 the chain carries Phosphothreonine. Residues H109, Y135, R136, A174, G182, V184, D213, G214, A215, N242, and Y244 each coordinate pyruvate. Y135 and R136 together coordinate thiamine diphosphate. Residues G182, V184, D213, G214, A215, and N242 each coordinate thiamine diphosphate. D213 is a Mg(2+) binding site. N242 and Y244 together coordinate Mg(2+). Phosphotyrosine is present on Y306. H309 provides a ligand contact to thiamine diphosphate. 2 positions are modified to phosphoserine: S310 and S312.

In terms of assembly, tetramer of 2 alpha and 2 beta subunits. The cofactor is thiamine diphosphate. Mg(2+) is required as a cofactor.

It localises to the mitochondrion matrix. It catalyses the reaction N(6)-[(R)-lipoyl]-L-lysyl-[protein] + pyruvate + H(+) = N(6)-[(R)-S(8)-acetyldihydrolipoyl]-L-lysyl-[protein] + CO2. Its activity is regulated as follows. E1 activity is regulated by phosphorylation (inactivation) and dephosphorylation (activation) of the alpha subunit. In terms of biological role, the pyruvate dehydrogenase complex catalyzes the overall conversion of pyruvate to acetyl-CoA and CO(2). It contains multiple copies of three enzymatic components: pyruvate dehydrogenase (E1), dihydrolipoamide acetyltransferase (E2) and lipoamide dehydrogenase (E3). The chain is Pyruvate dehydrogenase E1 component subunit alpha, mitochondrial (pda1) from Schizosaccharomyces pombe (strain 972 / ATCC 24843) (Fission yeast).